A 337-amino-acid polypeptide reads, in one-letter code: MIIATIGSHSALQILHGAKKEGFQTMVITDNKRENFYKNFSFIDNIYAYASLDEAVSIINGIKDYGILIPHGSLVEYLGKERVDKIETKIFGNKKIFEWEADQKKKMELLRKSNIKIPEIFERPEDVDRLVIVKLNGAKGGKGYFLARNKSEVKEGIQKLIESKMIRDENEVIIQEYVVGVPMYFQFFYSDIINRTEIFGIDIRYETNIDGLRRLPFEYMKELKINPTFVVVGNIPAVARESLLPVALEYANNFVRTTKELVPPGMIGPFCLESIITDNSDIVVFEFSGRIVAGTNLYVNGSPYSWLYWDEPMSIGRRIAREIRVANEKDKLSLVVS.

Histidine 9 and serine 73 together coordinate 5-amino-1-(5-phospho-beta-D-ribosyl)imidazole-4-carboxamide. The region spanning 94 to 324 is the ATP-grasp domain; that stretch reads KKIFEWEADQ…IGRRIAREIR (231 aa). ATP contacts are provided by residues 124–184 and glutamate 206; that span reads PEDV…VPMY. Residue asparagine 234 participates in 5-amino-1-(5-phospho-beta-D-ribosyl)imidazole-4-carboxamide binding. Mg(2+)-binding residues include glutamate 273 and glutamate 286.

This sequence belongs to the phosphohexose mutase family. Mg(2+) serves as cofactor. The cofactor is Mn(2+).

The enzyme catalyses 5-amino-1-(5-phospho-beta-D-ribosyl)imidazole-4-carboxamide + formate + ATP = 5-formamido-1-(5-phospho-D-ribosyl)imidazole-4-carboxamide + ADP + phosphate. The protein operates within purine metabolism; IMP biosynthesis via de novo pathway; 5-formamido-1-(5-phospho-D-ribosyl)imidazole-4-carboxamide from 5-amino-1-(5-phospho-D-ribosyl)imidazole-4-carboxamide (formate route): step 1/1. Its function is as follows. Catalyzes the ATP- and formate-dependent formylation of 5-aminoimidazole-4-carboxamide-1-beta-d-ribofuranosyl 5'-monophosphate (AICAR) to 5-formaminoimidazole-4-carboxamide-1-beta-d-ribofuranosyl 5'-monophosphate (FAICAR) in the absence of folates. This is 5-formaminoimidazole-4-carboxamide-1-(beta)-D-ribofuranosyl 5'-monophosphate synthetase from Saccharolobus solfataricus (strain ATCC 35092 / DSM 1617 / JCM 11322 / P2) (Sulfolobus solfataricus).